Here is a 748-residue protein sequence, read N- to C-terminus: Polyribonucleotide nucleotidyltransferase (748 aa).

Residues Asp-487 and Asp-493 each coordinate Mg(2+). The KH domain maps to 554 to 613 (PSTTTIKIDKDKIRDIIGPSGKVIKEICETSGAKIDISDDGTVSVYASDRDKLKVALDKI). Positions 623 to 691 (GEIFNGTVVK…NKGKAKLTIK (69 aa)) constitute an S1 motif domain. Positions 693–733 (ADKDKSSNNTKPKTHVNNTKDNSEPEQRRDSSKKRAWNEDN) are disordered. Over residues 699–712 (SNNTKPKTHVNNTK) the composition is skewed to polar residues. Basic and acidic residues predominate over residues 713-722 (DNSEPEQRRD).

Belongs to the polyribonucleotide nucleotidyltransferase family. The cofactor is Mg(2+).

Its subcellular location is the cytoplasm. It carries out the reaction RNA(n+1) + phosphate = RNA(n) + a ribonucleoside 5'-diphosphate. Functionally, involved in mRNA degradation. Catalyzes the phosphorolysis of single-stranded polyribonucleotides processively in the 3'- to 5'-direction. This Rickettsia peacockii (strain Rustic) protein is Polyribonucleotide nucleotidyltransferase.